The following is a 239-amino-acid chain: 1-(5-phosphoribosyl)-5-[(5-phosphoribosylamino)methylideneamino] imidazole-4-carboxamide isomerase (239 aa).

The active-site Proton acceptor is the Asp-12. Asp-133 (proton donor) is an active-site residue.

The protein belongs to the HisA/HisF family.

It is found in the cytoplasm. The enzyme catalyses 1-(5-phospho-beta-D-ribosyl)-5-[(5-phospho-beta-D-ribosylamino)methylideneamino]imidazole-4-carboxamide = 5-[(5-phospho-1-deoxy-D-ribulos-1-ylimino)methylamino]-1-(5-phospho-beta-D-ribosyl)imidazole-4-carboxamide. It participates in amino-acid biosynthesis; L-histidine biosynthesis; L-histidine from 5-phospho-alpha-D-ribose 1-diphosphate: step 4/9. In Sulfurihydrogenibium sp. (strain YO3AOP1), this protein is 1-(5-phosphoribosyl)-5-[(5-phosphoribosylamino)methylideneamino] imidazole-4-carboxamide isomerase.